Consider the following 631-residue polypeptide: Leukocyte immunoglobulin-like receptor subfamily B member 3 (631 aa).

The N-terminal stretch at 1–23 (MTPALTALLCLGLSLGPRTRVQA) is a signal peptide. Over 24 to 443 (GPFPKPTLWA…STPGLGRYLE (420 aa)) the chain is Extracellular. Ig-like C2-type domains follow at residues 42-100 (GSPV…RCHY), 111-229 (DPLE…SLLT), 225-314 (PSLL…DPLN), and 338-419 (GENV…LVVS). Cysteines 49 and 98 form a disulfide. Basic and acidic residues predominate over residues 59–70 (RLHKEGSPEPLD). Positions 59–78 (RLHKEGSPEPLDRNNPLEPK) are disordered. A glycan (N-linked (GlcNAc...) asparagine) is linked at Asn-139. 2 cysteine pairs are disulfide-bonded: Cys-144-Cys-196 and Cys-245-Cys-296. N-linked (GlcNAc...) asparagine glycans are attached at residues Asn-280, Asn-301, and Asn-340. Cys-345 and Cys-396 are disulfide-bonded. A helical transmembrane segment spans residues 444–464 (VLIGVSVAFVLLLFLLLFLLL). The Cytoplasmic segment spans residues 465-631 (RRQRHSKHRT…PSIYATLAIH (167 aa)). Residues 470-631 (SKHRTSDQRK…PSIYATLAIH (162 aa)) are disordered. The span at 473 to 482 (RTSDQRKTDF) shows a compositional bias: basic and acidic residues. The short motif at 512-517 (NLYAAV) is the ITIM motif 1 element. Basic and acidic residues-rich tracts occupy residues 520 to 537 (TQSE…HDED) and 567 to 581 (LDTK…RQMD). Residues 588-600 (EASQDVTYAQLHS) are compositionally biased toward polar residues. 2 short sequence motifs (ITIM motif) span residues 593–598 (VTYAQL) and 623–628 (SIYATL). Residues Tyr-595 and Tyr-625 each carry the phosphotyrosine; by LYN modification.

As to quaternary structure, interacts with LYN, PTPN6/SHP-1 and PTPN11/SHP-2. In terms of processing, phosphorylated on tyrosine residues by LYN. Phosphorylation at Tyr-595 and Tyr-625 is important for interaction with PTPN6/SHP-1 and PTPN11/SHP-2. In terms of tissue distribution, detected in monocytes and B-cells.

It localises to the cell membrane. May act as receptor for class I MHC antigens. Becomes activated upon coligation of LILRB3 and immune receptors, such as FCGR2B and the B-cell receptor. Down-regulates antigen-induced B-cell activation by recruiting phosphatases to its immunoreceptor tyrosine-based inhibitor motifs (ITIM). The chain is Leukocyte immunoglobulin-like receptor subfamily B member 3 (LILRB3) from Homo sapiens (Human).